A 184-amino-acid polypeptide reads, in one-letter code: Signal peptidase complex catalytic subunit SEC11 (184 aa).

Topologically, residues 1 to 28 are cytoplasmic; sequence MDFIKEQYNSLVLDLRKTFRNKRDGLSH. Residues 29–49 traverse the membrane as a helical; Signal-anchor for type II membrane protein segment; it reads ILNVICLLLNALMIWKLLVVF. The Lumenal segment spans residues 50-184; the sequence is TGCESPVVVV…MLIMILMGYE (135 aa). Catalysis depends on charge relay system residues Ser63, His101, and Asp127. Positions 170-181 are C-terminal short (CTS) helix; that stretch reads AIVSIMLIMILM.

The protein belongs to the peptidase S26B family. In terms of assembly, component of the signal peptidase complex (SPC) composed of a catalytic subunit SEC11/SPC21 and three accessory subunits SPC25, SPC3/SPC22, SPC1/SPC12. Within the complex, interacts with SPC25. The complex induces a local thinning of the ER membrane which is used to measure the length of the signal peptide (SP) h-region of protein substrates. This ensures the selectivity of the complex towards h-regions shorter than 18-20 amino acids. The complex interacts with the SEC61 channel-forming translocon complex and is involved in the import of classical signal sequence-containing proteins. In terms of processing, phosphorylated. Phosphorylation increases catalytic activity.

It is found in the endoplasmic reticulum membrane. It catalyses the reaction Cleavage of hydrophobic, N-terminal signal or leader sequences from secreted and periplasmic proteins.. With respect to regulation, phosphorylation increases catalytic activity. Ca(2+) slightly increases catalytic activity in vitro. Functionally, catalytic component of the signal peptidase complex (SPC) which catalyzes the cleavage of N-terminal signal sequences from nascent proteins as they are translocated into the lumen of the endoplasmic reticulum. Specifically cleaves N-terminal signal peptides that contain a hydrophobic alpha-helix (h-region) shorter than 18-20 amino acids. This chain is Signal peptidase complex catalytic subunit SEC11, found in Plasmodium falciparum (isolate 3D7).